The sequence spans 534 residues: H(+)/hexose cotransporter 1 (534 aa).

The Cytoplasmic portion of the chain corresponds to 1–21 (MAGGGVVVVSGRGLSTGDYRG). Residues 22–42 (GLTVYVVMVAFMAACGGLLLG) traverse the membrane as a helical segment. Over 43 to 87 (YDNGVTGGVVSLEAFEKKFFPDVWAKKQEVHEDSPYCTYDNAKLQ) the chain is Extracellular. Residues 88-108 (LFVSSLFLAGLVSCLFASWIT) form a helical membrane-spanning segment. Over 109 to 114 (RNWGRK) the chain is Cytoplasmic. A helical transmembrane segment spans residues 115–135 (VTMGIGGAFFVAGGLVNAFAQ). Over 136–144 (DMAMLIVGR) the chain is Extracellular. The chain crosses the membrane as a helical span at residues 145–165 (VLLGFGVGLGSQVVPQYLSEV). The Cytoplasmic portion of the chain corresponds to 166–173 (APFSHRGM). The chain crosses the membrane as a helical span at residues 174 to 194 (LNIGYQLFVTIGILIAGLVNY). Over 195-204 (AVRDWENGWR) the chain is Extracellular. Residues 205–225 (LSLGPAAAPGAILFLGSLVLP) traverse the membrane as a helical segment. Over 226 to 299 (ESPNFLVEKG…TSFVIQFFQQ (74 aa)) the chain is Cytoplasmic. The chain crosses the membrane as a helical span at residues 300-322 (FTGINAIIFYVPVLFSSLGSANS). Over 323–328 (AALLNT) the chain is Extracellular. Residues 329-349 (VVVGAVNVGSTLIAVMFSDKF) traverse the membrane as a helical segment. At 350–352 (GRR) the chain is on the cytoplasmic side. The chain crosses the membrane as a helical span at residues 353-373 (FLLIEGGIQCCLAMLTTGVVL). The Extracellular portion of the chain corresponds to 374-387 (AIEFAKYGTDPLPK). The helical transmembrane segment at 388–408 (AVASGILAVICIFISGFAWSW) threads the bilayer. Over 409-433 (GPMGWLIPSEIFTLETRPAGTAVAV) the chain is Cytoplasmic. The helical transmembrane segment at 434-454 (VGNFLFSFVIGQAFVSMLCAM) threads the bilayer. Residues 455-456 (EY) are Extracellular-facing. The chain crosses the membrane as a helical span at residues 457-477 (GVFLFFAGWLVIMVLCAIFLL). The Cytoplasmic segment spans residues 478–534 (PETKGVPIERVQALYARHWFWNRVMGPAAAEVIAEDEKRVAAASAIIKEEELSKAMK).

This sequence belongs to the major facilitator superfamily. Sugar transporter (TC 2.A.1.1) family.

Its subcellular location is the membrane. Its function is as follows. Active uptake of hexoses. The chain is H(+)/hexose cotransporter 1 (HUP1) from Parachlorella kessleri (Green alga).